Consider the following 315-residue polypeptide: Methionyl-tRNA formyltransferase (315 aa).

A (6S)-5,6,7,8-tetrahydrofolate-binding site is contributed by 113-116 (SLLP).

This sequence belongs to the Fmt family.

The catalysed reaction is L-methionyl-tRNA(fMet) + (6R)-10-formyltetrahydrofolate = N-formyl-L-methionyl-tRNA(fMet) + (6S)-5,6,7,8-tetrahydrofolate + H(+). Attaches a formyl group to the free amino group of methionyl-tRNA(fMet). The formyl group appears to play a dual role in the initiator identity of N-formylmethionyl-tRNA by promoting its recognition by IF2 and preventing the misappropriation of this tRNA by the elongation apparatus. In Enterobacter sp. (strain 638), this protein is Methionyl-tRNA formyltransferase.